Consider the following 322-residue polypeptide: Phthalate dioxygenase reductase (322 aa).

Residues 7-109 (DGFLRLKIAS…SLPRNEFPLD (103 aa)) enclose the FAD-binding FR-type domain. FMN contacts are provided by residues 56-57 (RT), 73-75 (AVK), 81-84 (RGGS), T125, and F226. Residues 239–322 (FTVRLSRSGT…AKSAELVLDL (84 aa)) enclose the 2Fe-2S ferredoxin-type domain. C273 contributes to the [2Fe-2S] cluster binding site. Position 275 (S275) interacts with FMN. Residues C278, C281, and C309 each coordinate [2Fe-2S] cluster.

This sequence belongs to the PDR/VanB family. In terms of assembly, monomer. The cofactor is FMN.

Functionally, component of the electron transfer chain involved in pyridine nucleotide-dependent dihydroxylation of phthalate. Utilizes FMN to mediate electron transfer from the two-electron donor, NADH, to the one-electron acceptor, (2Fe-2S). This is Phthalate dioxygenase reductase (ophA1) from Burkholderia cepacia (Pseudomonas cepacia).